The chain runs to 305 residues: PI-PLC X domain-containing protein 2 (305 aa).

The 174-residue stretch at 42–215 folds into the PI-PLC X-box domain; sequence HLHNLPLSNL…NCQVLIFYHC (174 aa). Catalysis depends on residues His-57 and His-132.

Widely expressed.

The protein resides in the nucleus. It carries out the reaction a 1,2-diacyl-sn-glycero-3-phospho-(1D-myo-inositol) + H2O = 1D-myo-inositol 1-phosphate + a 1,2-diacyl-sn-glycerol + H(+). In terms of biological role, catalyzes the hydrolysis of inositol from phosphatidylinositol (1,2-diacyl-sn-glycero-3-phospho-(1D-myo-inositol), PI). Could also hydrolyze various multi-phosphorylated derivatives of PI, such as phosphatidylinositol-4,5 bisphosphate (PIP2), releasing inositol-1,4,5-trisphosphate (IP3) and the protein kinase C activator diacylglycerol (DAG), therefore mediating cell signaling. This Homo sapiens (Human) protein is PI-PLC X domain-containing protein 2 (PLCXD2).